We begin with the raw amino-acid sequence, 509 residues long: Bifunctional purine biosynthesis protein PurH (509 aa).

Residues 1–144 form the MGS-like domain; sequence MKRALISVSD…KNYAAVTVVV (144 aa).

This sequence belongs to the PurH family.

It carries out the reaction (6R)-10-formyltetrahydrofolate + 5-amino-1-(5-phospho-beta-D-ribosyl)imidazole-4-carboxamide = 5-formamido-1-(5-phospho-D-ribosyl)imidazole-4-carboxamide + (6S)-5,6,7,8-tetrahydrofolate. It catalyses the reaction IMP + H2O = 5-formamido-1-(5-phospho-D-ribosyl)imidazole-4-carboxamide. It functions in the pathway purine metabolism; IMP biosynthesis via de novo pathway; 5-formamido-1-(5-phospho-D-ribosyl)imidazole-4-carboxamide from 5-amino-1-(5-phospho-D-ribosyl)imidazole-4-carboxamide (10-formyl THF route): step 1/1. It participates in purine metabolism; IMP biosynthesis via de novo pathway; IMP from 5-formamido-1-(5-phospho-D-ribosyl)imidazole-4-carboxamide: step 1/1. The chain is Bifunctional purine biosynthesis protein PurH from Listeria innocua serovar 6a (strain ATCC BAA-680 / CLIP 11262).